We begin with the raw amino-acid sequence, 242 residues long: Ribose-5-phosphate isomerase A (242 aa).

Substrate contacts are provided by residues 39-42 (SGST), 95-98 (DGAD), and 108-111 (KGGG). The Proton acceptor role is filled by E117. Substrate is bound at residue K135.

This sequence belongs to the ribose 5-phosphate isomerase family. Homodimer.

It catalyses the reaction aldehydo-D-ribose 5-phosphate = D-ribulose 5-phosphate. It participates in carbohydrate degradation; pentose phosphate pathway; D-ribose 5-phosphate from D-ribulose 5-phosphate (non-oxidative stage): step 1/1. Functionally, catalyzes the reversible conversion of ribose-5-phosphate to ribulose 5-phosphate. The sequence is that of Ribose-5-phosphate isomerase A from Chlamydia trachomatis serovar D (strain ATCC VR-885 / DSM 19411 / UW-3/Cx).